The chain runs to 247 residues: Phosphoglycerate mutase 1 (247 aa).

Substrate contacts are provided by residues 8–15 (RHGQSEWN) and 21–22 (TG). The active-site Tele-phosphohistidine intermediate is H9. Position 12 is a phosphoserine (S12). Residue K31 forms a Glycyl lysine isopeptide (Lys-Gly) (interchain with G-Cter in ubiquitin) linkage. Position 49 is a phosphotyrosine (Y49). K57 is covalently cross-linked (Glycyl lysine isopeptide (Lys-Gly) (interchain with G-Cter in ubiquitin)). Position 60 (R60) interacts with substrate. Residue K71 forms a Glycyl lysine isopeptide (Lys-Gly) (interchain with G-Cter in ubiquitin) linkage. E87 serves as the catalytic Proton donor/acceptor. Substrate is bound by residues 87-90 (ERHY), K98, and 114-115 (RR). 3 positions are modified to phosphoserine: S116, S127, and S128. Glycyl lysine isopeptide (Lys-Gly) (interchain with G-Cter in ubiquitin) cross-links involve residues K139 and K175. 183–184 (GN) lines the substrate pocket. S185 is modified (phosphoserine). K191 participates in a covalent cross-link: Glycyl lysine isopeptide (Lys-Gly) (interchain with G-Cter in ubiquitin). S197 carries the phosphoserine modification.

It belongs to the phosphoglycerate mutase family. BPG-dependent PGAM subfamily. In terms of assembly, homotetramer: dimer of dimers.

The protein localises to the cytoplasm. It localises to the mitochondrion outer membrane. It is found in the mitochondrion intermembrane space. It carries out the reaction (2R)-2-phosphoglycerate = (2R)-3-phosphoglycerate. It functions in the pathway carbohydrate degradation; glycolysis; pyruvate from D-glyceraldehyde 3-phosphate: step 3/5. With respect to regulation, inhibited by inositol hexakisphosphate and benzene tri-, tetra- and hexacarboxylates. Interconversion of 3- and 2-phosphoglycerate with 2,3-bisphosphoglycerate as the primer of the reaction. Can also catalyze the reaction of EC 5.4.2.4 (synthase), but with a reduced activity. The polypeptide is Phosphoglycerate mutase 1 (GPM1) (Saccharomyces cerevisiae (strain ATCC 204508 / S288c) (Baker's yeast)).